The following is a 496-amino-acid chain: Fibronectin type III and SPRY domain-containing protein 1 (496 aa).

The stretch at 4–99 forms a coiled coil; it reads QREALRKIIT…ALESSEELLE (96 aa). One can recognise a COS domain in the interval 105-162; the sequence is LQASDSEDFSQAAKEIKDGITMAPAFRLSLKAKVSDNMSHLMVDFAQERQMLQALKFL. Residues 164 to 268 enclose the Fibronectin type-III domain; sequence VPSAPTIDLA…EPVTLETPAF (105 aa). The B30.2/SPRY domain occupies 290–477; sequence WDAMGGKVQD…VTTGLQVPSA (188 aa). Residues 301–336 are disordered; that stretch reads KAREKEGKGRTASPVNSPARGTPSPKRMSSGRGGRD. An omega-N-methylarginine mark is found at Arg-310 and Arg-320.

Oligomerization is required for binding to microtubules.

The protein resides in the cytoplasm. It is found in the cytoskeleton. Its subcellular location is the microtubule organizing center. It localises to the centrosome. The protein localises to the nucleus. The protein resides in the cleavage furrow. In terms of biological role, may be involved in microtubule organization and stabilization. This chain is Fibronectin type III and SPRY domain-containing protein 1 (Fsd1), found in Mus musculus (Mouse).